Reading from the N-terminus, the 323-residue chain is Lipid A biosynthesis myristoyltransferase (323 aa).

Residues 23–43 form a helical membrane-spanning segment; sequence YWGAWLGVAAMAGIALTPPKF. The HXXXXD motif motif lies at 139-144; sequence HGWAVD.

This sequence belongs to the LpxL/LpxM/LpxP family. LpxM subfamily.

Its subcellular location is the cell inner membrane. It catalyses the reaction alpha-Kdo-(2-&gt;4)-alpha-Kdo-(2-&gt;6)-(dodecanoyl)-lipid IVA (E. coli) + tetradecanoyl-[ACP] = alpha-Kdo-(2-&gt;4)-alpha-Kdo-(2-&gt;6)-lipid A (E. coli) + holo-[ACP]. The catalysed reaction is (9Z)-hexadecenoyl-(Kdo)2-lipid IVA (E. coli) + tetradecanoyl-[ACP] = ((9Z)-hexadecenoyl-tetradecanoyl)-(Kdo)2-lipid A + holo-[ACP]. It functions in the pathway glycolipid biosynthesis; KDO(2)-lipid A biosynthesis; KDO(2)-lipid A from CMP-3-deoxy-D-manno-octulosonate and lipid IV(A): step 4/4. The protein operates within bacterial outer membrane biogenesis; lipopolysaccharide biosynthesis. Catalyzes the transfer of myristate from myristoyl-[acyl-carrier-protein] (ACP) to Kdo(2)-(lauroyl)-lipid IV(A) to form Kdo(2)-lipid A. Can probably also catalyze the transfer of myristate to Kdo(2)-(palmitoleoyl)-lipid IV(A) to form the cold-adapted Kdo(2)-lipid A. In vitro, can acylate Kdo(2)-lipid IV(A), but acylation of (KDO)2-(lauroyl)-lipid IV(A) is about 100 times faster. In vitro, can use lauroyl-ACP but displays a slight kinetic preference for myristoyl-ACP. This is Lipid A biosynthesis myristoyltransferase from Escherichia coli (strain K12).